Consider the following 409-residue polypeptide: Phosphatidylserine decarboxylase proenzyme, mitochondrial (409 aa).

The transit peptide at 1–52 (MATSVGHRCLGLLHGVAPWRSSLHPCEITALSQSLQPLRKLPFRAFRTDARK) directs the protein to the mitochondrion. The segment at 36–103 (QPLRKLPFRA…LGLEIPPKLA (68 aa)) is necessary for localization to both lipid droplets and mitochondria. Residues 53-63 (IHTAPARTMFL) lie on the Mitochondrial matrix side of the membrane. Residues 64-82 (LRPLPILLVTGGGYAGYRQ) form a helical membrane-spanning segment. At 83–409 (YEKYRERELE…IRFGEALGSL (327 aa)) the chain is on the mitochondrial intermembrane side. Residues Asp191, His267, and Ser378 each act as charge relay system; for autoendoproteolytic cleavage activity in the active site. Ser378 acts as the Schiff-base intermediate with substrate; via pyruvic acid; for decarboxylase activity in catalysis. Ser378 bears the Pyruvic acid (Ser); by autocatalysis mark.

Belongs to the phosphatidylserine decarboxylase family. PSD-B subfamily. Eukaryotic type I sub-subfamily. As to quaternary structure, heterodimer of a large membrane-associated beta subunit and a small pyruvoyl-containing alpha subunit. Requires pyruvate as cofactor. Is synthesized initially as an inactive proenzyme. Formation of the active enzyme involves a self-maturation process in which the active site pyruvoyl group is generated from an internal serine residue via an autocatalytic post-translational modification. Two non-identical subunits are generated from the proenzyme in this reaction, and the pyruvate is formed at the N-terminus of the alpha chain, which is derived from the carboxyl end of the proenzyme. The autoendoproteolytic cleavage occurs by a canonical serine protease mechanism, in which the side chain hydroxyl group of the serine supplies its oxygen atom to form the C-terminus of the beta chain, while the remainder of the serine residue undergoes an oxidative deamination to produce ammonia and the pyruvoyl prosthetic group on the alpha chain. During this reaction, the Ser that is part of the protease active site of the proenzyme becomes the pyruvoyl prosthetic group, which constitutes an essential element of the active site of the mature decarboxylase.

The protein resides in the mitochondrion inner membrane. Its subcellular location is the cytoplasm. It is found in the lipid droplet. It carries out the reaction a 1,2-diacyl-sn-glycero-3-phospho-L-serine + H(+) = a 1,2-diacyl-sn-glycero-3-phosphoethanolamine + CO2. It participates in phospholipid metabolism; phosphatidylethanolamine biosynthesis. Its function is as follows. Catalyzes the formation of phosphatidylethanolamine (PtdEtn) from phosphatidylserine (PtdSer). Plays a central role in phospholipid metabolism and in the interorganelle trafficking of phosphatidylserine. May be involved in lipid droplet biogenesis at the endoplasmic reticulum membrane. This chain is Phosphatidylserine decarboxylase proenzyme, mitochondrial, found in Homo sapiens (Human).